A 478-amino-acid polypeptide reads, in one-letter code: UDP-N-acetylmuramate--L-alanine ligase (478 aa).

120–126 is an ATP binding site; sequence GSHGKTT.

This sequence belongs to the MurCDEF family.

Its subcellular location is the cytoplasm. The enzyme catalyses UDP-N-acetyl-alpha-D-muramate + L-alanine + ATP = UDP-N-acetyl-alpha-D-muramoyl-L-alanine + ADP + phosphate + H(+). It functions in the pathway cell wall biogenesis; peptidoglycan biosynthesis. Its function is as follows. Cell wall formation. The protein is UDP-N-acetylmuramate--L-alanine ligase of Rickettsia bellii (strain OSU 85-389).